A 416-amino-acid chain; its full sequence is MSISKESSKTMIDIEKKGGEGKDGKGGSKMTKNEQFLLPFTFILIGLSSLNVWNTALGLNINFKYNTFQITGLVCSSIIALFVKVPKMLLPFALGGLAMLCAGFQIAHQCFTFEQFDTYCLIAFIVIGIMAGLAQTIAFSVGTTMEENMGGYMSAGIGISGVFIFIINLLLDQIVPDQKKFNVNEAKLLYLFLICELCLVLAIIFSVCNLELSSSKTSKEEEYSDKEQGLSYLELLKDSYKAILAMFLVNWLSLQLFPGVGHKKWQESHNISDYNVTLIVGMFQVFDFVSRYPPNLSHMKIFKWFTFSLNKLLLLNFLRLLFIPWFVINAACDLPIFTNIVQQCVCMAMLAFTNGWFNTVPFLVFVQELKKAKKKKDIETISTFLVVAMFVGLFMGIWTTYIYDFFPIVIKRYVVP.

Over residues 1-26 (MSISKESSKTMIDIEKKGGEGKDGKG) the composition is skewed to basic and acidic residues. Residues 1-28 (MSISKESSKTMIDIEKKGGEGKDGKGGS) form a disordered region. The Cytoplasmic segment spans residues 1-35 (MSISKESSKTMIDIEKKGGEGKDGKGGSKMTKNEQ). Residues 36-58 (FLLPFTFILIGLSSLNVWNTALG) traverse the membrane as a helical segment. The Extracellular portion of the chain corresponds to 59-64 (LNINFK). Residues 65-83 (YNTFQITGLVCSSIIALFV) traverse the membrane as a helical segment. Residues 84–87 (KVPK) are Cytoplasmic-facing. A helical membrane pass occupies residues 88 to 107 (MLLPFALGGLAMLCAGFQIA). The Extracellular segment spans residues 108–119 (HQCFTFEQFDTY). Residues 120 to 139 (CLIAFIVIGIMAGLAQTIAF) traverse the membrane as a helical segment. Topologically, residues 140–148 (SVGTTMEEN) are cytoplasmic. The helical transmembrane segment at 149-171 (MGGYMSAGIGISGVFIFIINLLL) threads the bilayer. Over 172–187 (DQIVPDQKKFNVNEAK) the chain is Extracellular. Residues 188-210 (LLYLFLICELCLVLAIIFSVCNL) form a helical membrane-spanning segment. The Cytoplasmic portion of the chain corresponds to 211–241 (ELSSSKTSKEEEYSDKEQGLSYLELLKDSYK). Residues 242-261 (AILAMFLVNWLSLQLFPGVG) traverse the membrane as a helical segment. Residues 262–273 (HKKWQESHNISD) lie on the Extracellular side of the membrane. Residues 274–292 (YNVTLIVGMFQVFDFVSRY) form a helical membrane-spanning segment. Topologically, residues 293–311 (PPNLSHMKIFKWFTFSLNK) are cytoplasmic. Residues 312–331 (LLLLNFLRLLFIPWFVINAA) traverse the membrane as a helical segment. At 332-343 (CDLPIFTNIVQQ) the chain is on the extracellular side. The helical transmembrane segment at 344–366 (CVCMAMLAFTNGWFNTVPFLVFV) threads the bilayer. Residues 367–380 (QELKKAKKKKDIET) are Cytoplasmic-facing. A helical membrane pass occupies residues 381–403 (ISTFLVVAMFVGLFMGIWTTYIY). Residues 404–416 (DFFPIVIKRYVVP) lie on the Extracellular side of the membrane.

The protein belongs to the SLC29A/ENT transporter (TC 2.A.57) family.

Its subcellular location is the cell membrane. The catalysed reaction is inosine(in) = inosine(out). It carries out the reaction adenosine(in) = adenosine(out). It catalyses the reaction hypoxanthine(out) = hypoxanthine(in). The enzyme catalyses guanosine(in) = guanosine(out). The catalysed reaction is guanine(out) = guanine(in). It carries out the reaction thymidine(in) = thymidine(out). It catalyses the reaction uridine(out) = uridine(in). The enzyme catalyses uracil(in) = uracil(out). The catalysed reaction is thymine(out) = thymine(in). It carries out the reaction adenine(out) = adenine(in). It catalyses the reaction cytosine(out) = cytosine(in). The enzyme catalyses xanthine(out) = xanthine(in). Its function is as follows. Nucleoside and nucleobase transporter with a broad substrate specificity. The polypeptide is Nucleoside transporter 1 (Plasmodium vivax (strain Salvador I)).